The primary structure comprises 559 residues: Heterochromatin protein 1-binding protein 3 (559 aa).

The segment at 1–132 (MATDLSEAEP…SKEKEKKVKK (132 aa)) is disordered. Basic and acidic residues-rich tracts occupy residues 51 to 68 (TPPK…KADA) and 96 to 128 (EQPK…EKEK). 3 consecutive H15 domains span residues 158 to 233 (SRPK…VVVS), 256 to 331 (QQVK…QLKK), and 339 to 414 (GGTL…QLCF). Residues 256–260 (QQVKL) carry the PxVxL motif motif. Residues 421–559 (DVLYPEKQQD…AMRKSLRAKK (139 aa)) are disordered. Residues 429 to 459 (QDEDSEESQEEEEEESEEEEESEEEESEEEE) are compositionally biased toward acidic residues. Residues 463-515 (KKRMQKRPPPKSRSRAPPMKRRESKPKPRKTPAAHQGKAKPPPKVKTPVKKAK) are compositionally biased toward basic residues. Residues 516–533 (PAAPAIKKPSGGSSSKKP) show a composition bias toward low complexity. Basic residues predominate over residues 549–559 (SAMRKSLRAKK).

It localises to the nucleus. Its subcellular location is the chromosome. In terms of biological role, component of heterochromatin that maintains heterochromatin integrity during G1/S progression and regulates the duration of G1 phase to critically influence cell proliferative capacity. The sequence is that of Heterochromatin protein 1-binding protein 3 (HP1BP3) from Gallus gallus (Chicken).